Here is a 475-residue protein sequence, read N- to C-terminus: Bifunctional protein HldE (475 aa).

Positions 1–318 are ribokinase; it reads MMQYSLKFNQ…ENAIHHREET (318 aa). 195–198 contacts ATP; sequence NMAE. Aspartate 264 is a catalytic residue. Residues 344–475 are cytidylyltransferase; the sequence is MTNGCFDILH…DVIKKIQAIR (132 aa).

The protein in the N-terminal section; belongs to the carbohydrate kinase PfkB family. In the C-terminal section; belongs to the cytidylyltransferase family. In terms of assembly, homodimer.

The enzyme catalyses D-glycero-beta-D-manno-heptose 7-phosphate + ATP = D-glycero-beta-D-manno-heptose 1,7-bisphosphate + ADP + H(+). The catalysed reaction is D-glycero-beta-D-manno-heptose 1-phosphate + ATP + H(+) = ADP-D-glycero-beta-D-manno-heptose + diphosphate. The protein operates within nucleotide-sugar biosynthesis; ADP-L-glycero-beta-D-manno-heptose biosynthesis; ADP-L-glycero-beta-D-manno-heptose from D-glycero-beta-D-manno-heptose 7-phosphate: step 1/4. It participates in nucleotide-sugar biosynthesis; ADP-L-glycero-beta-D-manno-heptose biosynthesis; ADP-L-glycero-beta-D-manno-heptose from D-glycero-beta-D-manno-heptose 7-phosphate: step 3/4. Its pathway is bacterial outer membrane biogenesis; LOS core biosynthesis. Catalyzes the phosphorylation of D-glycero-D-manno-heptose 7-phosphate at the C-1 position to selectively form D-glycero-beta-D-manno-heptose-1,7-bisphosphate. Its function is as follows. Catalyzes the ADP transfer from ATP to D-glycero-beta-D-manno-heptose 1-phosphate, yielding ADP-D-glycero-beta-D-manno-heptose. In Haemophilus ducreyi (strain 35000HP / ATCC 700724), this protein is Bifunctional protein HldE.